A 382-amino-acid chain; its full sequence is Inactive serine protease 54 (382 aa).

Positions 1 to 20 (MAELRGILLLLLYMSHSSSA) are cleaved as a signal peptide. One can recognise a Peptidase S1 domain in the interval 29-258 (IVDQLHENLV…YSNWIIAKTR (230 aa)). N-linked (GlcNAc...) asparagine glycosylation occurs at asparagine 113. Cystine bridges form between cysteine 154–cysteine 216, cysteine 185–cysteine 195, and cysteine 206–cysteine 237.

This sequence belongs to the peptidase S1 family. Plasma kallikrein subfamily.

The protein localises to the secreted. The chain is Inactive serine protease 54 (Prss54) from Rattus norvegicus (Rat).